We begin with the raw amino-acid sequence, 521 residues long: BAR/IMD domain-containing adapter protein 2 (521 aa).

The IMD domain occupies 1-250; it reads MSLSRSEEMH…VQLMQQIASS (250 aa). Positions 132–153 form a coiled coil; that stretch reads DALDKCQAELKKLRKKSQGSKN. A phosphoserine mark is found at Ser-262, Ser-324, Ser-326, and Ser-337. The interval 299 to 370 is disordered; sequence VMNGVAGPDS…TLPRSSSMAA (72 aa). Residues 321 to 335 show a composition bias toward low complexity; the sequence is QPKSLSPPQSQSKLS. Thr-341 is modified (phosphothreonine). Phosphoserine is present on Ser-347. Residues 349-368 are compositionally biased toward polar residues; the sequence is TPKNSYATTENKTLPRSSSM. Thr-361 bears the Phosphothreonine mark. Phosphoserine is present on residues Ser-367, Ser-385, Ser-396, and Ser-455. An SH3 domain is found at 375–438; the sequence is NGRMRVKAIF…PFSYTRVLDS (64 aa). The segment at 445-480 is disordered; sequence HMSLQQGKSSSTGNLLDKDDLAVPPPDYGTSSRAFP. The segment covering 447-458 has biased composition (polar residues); it reads SLQQGKSSSTGN.

Homodimer. Interacts with CDC42 and RAC1 that have been activated by GTP binding. Interacts with ATN1, ADGRB1, DIAPH1, EPS8, SHANK1, SHANK2, SHANK3, TIAM1, WASF1 and WASF2. Interacts with ENAH after recruitment of CDC42. Post-translationally, phosphorylated on tyrosine residues by INSR in response to insulin treatment.

The protein resides in the cytoplasm. It is found in the membrane. It localises to the cell projection. The protein localises to the filopodium. Its subcellular location is the ruffle. The protein resides in the cytoskeleton. Functionally, adapter protein that links membrane-bound small G-proteins to cytoplasmic effector proteins. Necessary for CDC42-mediated reorganization of the actin cytoskeleton and for RAC1-mediated membrane ruffling. Involved in the regulation of the actin cytoskeleton by WASF family members and the Arp2/3 complex. Plays a role in neurite growth. Acts syngeristically with ENAH to promote filipodia formation. Plays a role in the reorganization of the actin cytoskeleton in response to bacterial infection. Participates in actin bundling when associated with EPS8, promoting filopodial protrusions. The sequence is that of BAR/IMD domain-containing adapter protein 2 (BAIAP2) from Cricetulus griseus (Chinese hamster).